The following is a 215-amino-acid chain: Probable phosphoglycerate mutase GpmB (215 aa).

Residues 8 to 15 (RHGETVWN), 21 to 22 (QG), Arg-58, 82 to 85 (ELNM), and 151 to 152 (GM) each bind substrate. The Tele-phosphohistidine intermediate role is filled by His-9. The active-site Proton donor/acceptor is the Glu-82.

Belongs to the phosphoglycerate mutase family. GpmB subfamily.

It catalyses the reaction (2R)-2-phosphoglycerate = (2R)-3-phosphoglycerate. It participates in carbohydrate degradation; glycolysis; pyruvate from D-glyceraldehyde 3-phosphate: step 3/5. This Yersinia enterocolitica serotype O:8 / biotype 1B (strain NCTC 13174 / 8081) protein is Probable phosphoglycerate mutase GpmB.